Reading from the N-terminus, the 210-residue chain is MSGVMGIDEAGRGPVFGPMVVAGVLAPKRELGLGARDSKELTRSARRRLIRALMSDERLRVDLRIVWPWEIDEEGVAKAEFEAIRELVRRAMPDEVILDKPGNYSPERLRRELDLPEGINLIAEERADAKYEVVSAASIVAKTYRDWIVRLLELEYGEVGSGYPSDPRTVDRLRRELRRGGELLKYFRRSWETYKRVESEVKQRKLEDFF.

Positions 2–203 constitute an RNase H type-2 domain; sequence SGVMGIDEAG…YKRVESEVKQ (202 aa). Asp8, Glu9, and Asp99 together coordinate a divalent metal cation.

The protein belongs to the RNase HII family. Requires Mn(2+) as cofactor. It depends on Mg(2+) as a cofactor.

It is found in the cytoplasm. The catalysed reaction is Endonucleolytic cleavage to 5'-phosphomonoester.. Functionally, endonuclease that specifically degrades the RNA of RNA-DNA hybrids. The protein is Ribonuclease HII of Methanopyrus kandleri (strain AV19 / DSM 6324 / JCM 9639 / NBRC 100938).